We begin with the raw amino-acid sequence, 178 residues long: Large ribosomal subunit protein uL6 (178 aa).

The protein belongs to the universal ribosomal protein uL6 family. As to quaternary structure, part of the 50S ribosomal subunit.

Functionally, this protein binds to the 23S rRNA, and is important in its secondary structure. It is located near the subunit interface in the base of the L7/L12 stalk, and near the tRNA binding site of the peptidyltransferase center. This chain is Large ribosomal subunit protein uL6, found in Francisella tularensis subsp. novicida (strain U112).